Consider the following 536-residue polypeptide: Lysosomal acid glucosylceramidase (536 aa).

A signal peptide spans 1–39 (MEFSSPSREECPKPLSRVSIMAGSLTGLLLLQAVSWASG). 2 disulfides stabilise this stretch: cysteine 43/cysteine 55 and cysteine 57/cysteine 62. Asparagine 58, asparagine 98, and asparagine 185 each carry an N-linked (GlcNAc...) asparagine glycan. Glutamate 274 acts as the Proton donor in catalysis. A glycan (N-linked (GlcNAc...) asparagine) is linked at asparagine 309. Residue glutamate 379 is the Nucleophile of the active site. A glycan (N-linked (GlcNAc...) asparagine) is linked at asparagine 501.

It belongs to the glycosyl hydrolase 30 family. As to quaternary structure, interacts with saposin-C. Interacts with SCARB2. Interacts with TCP1. May interacts with SNCA; this interaction may inhibit the glucosylceramidase activity. Interacts with GRN; this interaction prevents aggregation of GBA1-SCARB2 complex via interaction with HSPA1A upon stress.

It is found in the lysosome membrane. It catalyses the reaction a beta-D-glucosyl-(1&lt;-&gt;1')-N-acylsphing-4-enine + H2O = an N-acylsphing-4-enine + D-glucose. The catalysed reaction is a beta-D-galactosyl-(1&lt;-&gt;1')-N-acylsphing-4-enine + H2O = an N-acylsphing-4-enine + D-galactose. It carries out the reaction cholesteryl 3-beta-D-glucoside + H2O = cholesterol + D-glucose. The enzyme catalyses a beta-D-glucosyl-(1&lt;-&gt;1')-N-acylsphing-4-enine + cholesterol = cholesteryl 3-beta-D-glucoside + an N-acylsphing-4-enine. It catalyses the reaction beta-D-glucosyl-N-(9Z-octadecenoyl)-sphing-4E-enine + cholesterol = N-(9Z-octadecenoyl)-sphing-4-enine + cholesteryl 3-beta-D-glucoside. The catalysed reaction is beta-D-glucosyl-(1&lt;-&gt;1')-N-hexadecanoylsphing-4-enine + cholesterol = cholesteryl 3-beta-D-glucoside + N-hexadecanoylsphing-4-enine. It carries out the reaction beta-D-glucosyl-N-octanoylsphing-4E-enine + cholesterol = N-octanoylsphing-4-enine + cholesteryl 3-beta-D-glucoside. The enzyme catalyses beta-D-glucosyl-N-dodecanoylsphing-4-enine + cholesterol = N-dodecanoylsphing-4-enine + cholesteryl 3-beta-D-glucoside. It catalyses the reaction beta-D-glucosyl-(1&lt;-&gt;1)-N-octadecanoylsphing-4-enine + cholesterol = N-octadecanoylsphing-4-enine + cholesteryl 3-beta-D-glucoside. The catalysed reaction is beta-D-glucosyl-(1&lt;-&gt;1')-N-(15Z-tetracosenoyl)-sphing-4-enine + cholesterol = N-(15Z-tetracosenoyl)-sphing-4-enine + cholesteryl 3-beta-D-glucoside. It carries out the reaction a beta-D-galactosyl-(1&lt;-&gt;1')-N-acylsphing-4-enine + cholesterol = cholesteryl 3-beta-D-galactoside + an N-acylsphing-4-enine. The enzyme catalyses 1-(beta-D-galactosyl)-N-dodecanoylsphing-4-enine + cholesterol = cholesteryl 3-beta-D-galactoside + N-dodecanoylsphing-4-enine. It catalyses the reaction a beta-D-xylosyl-(1&lt;-&gt;1')-N-acylsphing-4-enine + cholesterol = cholesteryl 3-beta-D-xyloside + an N-acylsphing-4-enine. The catalysed reaction is beta-D-xylosyl-(1&lt;-&gt;1')-N-(9Z-octadecenoyl)-sphing-4-enine + cholesterol = cholesteryl 3-beta-D-xyloside + N-(9Z-octadecenoyl)-sphing-4-enine. Its pathway is steroid metabolism; cholesterol metabolism. The protein operates within sphingolipid metabolism. Synergistically activated by saposin-A and saposin-C, two saposin peptides produced by proteolytic processing of prosaposin/PSAP. Saposin-C activates GBA1 through its recruitment to membranes. The membrane structure and composition in anionic phospholipids are also important for the activation. Activated by PKC in the salvage pathway of ceramide formation. Inhibited by conduritol B epoxide/CBE. Glucosylceramidase that catalyzes, within the lysosomal compartment, the hydrolysis of glucosylceramides/GlcCers (such as beta-D-glucosyl-(1&lt;-&gt;1')-N-acylsphing-4-enine) into free ceramides (such as N-acylsphing-4-enine) and glucose. Plays a central role in the degradation of complex lipids and the turnover of cellular membranes. Through the production of ceramides, participates in the PKC-activated salvage pathway of ceramide formation. Catalyzes the glucosylation of cholesterol, through a transglucosylation reaction where glucose is transferred from GlcCer to cholesterol. GlcCer containing mono-unsaturated fatty acids (such as beta-D-glucosyl-N-(9Z-octadecenoyl)-sphing-4-enine) are preferred as glucose donors for cholesterol glucosylation when compared with GlcCer containing same chain length of saturated fatty acids (such as beta-D-glucosyl-N-octadecanoyl-sphing-4-enine). Under specific conditions, may alternatively catalyze the reverse reaction, transferring glucose from cholesteryl 3-beta-D-glucoside to ceramide. Can also hydrolyze cholesteryl 3-beta-D-glucoside producing glucose and cholesterol. Catalyzes the hydrolysis of galactosylceramides/GalCers (such as beta-D-galactosyl-(1&lt;-&gt;1')-N-acylsphing-4-enine), as well as the transfer of galactose between GalCers and cholesterol in vitro, but with lower activity than with GlcCers. Contrary to GlcCer and GalCer, xylosylceramide/XylCer (such as beta-D-xyosyl-(1&lt;-&gt;1')-N-acylsphing-4-enine) is not a good substrate for hydrolysis, however it is a good xylose donor for transxylosylation activity to form cholesteryl 3-beta-D-xyloside. The protein is Lysosomal acid glucosylceramidase of Homo sapiens (Human).